The primary structure comprises 1169 residues: Pesticidal crystal protein Cry1Fb (1169 aa).

Belongs to the delta endotoxin family.

Functionally, promotes colloidosmotic lysis by binding to the midgut epithelial cells of insects. The chain is Pesticidal crystal protein Cry1Fb (cry1Fb) from Bacillus thuringiensis subsp. morrisoni.